Here is a 294-residue protein sequence, read N- to C-terminus: MKVGFIGLGIMGKPMSKNLLKAGYSLVVADRNPEAIADVIAAGAETASTAKAIAEQCDVIITMLPNSPHVKEVALGENGIIEGAKPGTVLIDMSSIAPLASREISEALKAKGIDMLDAPVSGGEPKAIDGTLSVMVGGDKAIFDKYYDLMKAMAGSVVHTGEIGAGNVTKLANQVIVALNIAAMSEALTLATKAGVNPDLVYQAIRGGLAGSTVLDAKAPMVMDRNFKPGFRIDLHIKDLANALDTSHGVGAQLPLTAAVMEMMQALRADGLGTADHSALACYYEKLAKVEVTR.

NAD(+)-binding positions include 4–18 and Ser95; that span reads GFIG…MSKN. Residue Lys170 is part of the active site. Lys238 provides a ligand contact to NAD(+).

Belongs to the HIBADH-related family. 2-hydroxy-3-oxopropionate reductase subfamily.

The enzyme catalyses (R)-glycerate + NADP(+) = 2-hydroxy-3-oxopropanoate + NADPH + H(+). It catalyses the reaction (R)-glycerate + NAD(+) = 2-hydroxy-3-oxopropanoate + NADH + H(+). It participates in carbohydrate acid metabolism; galactarate degradation; D-glycerate from galactarate: step 3/3. In terms of biological role, catalyzes the reduction of tatronate semialdehyde to D-glycerate. The chain is 2-hydroxy-3-oxopropionate reductase from Escherichia coli O6:H1 (strain CFT073 / ATCC 700928 / UPEC).